The sequence spans 187 residues: UPF0301 protein PBPRA3139 (187 aa).

The protein belongs to the UPF0301 (AlgH) family.

The protein is UPF0301 protein PBPRA3139 of Photobacterium profundum (strain SS9).